The following is a 493-amino-acid chain: Glutamyl-tRNA(Gln) amidotransferase subunit A (493 aa).

Catalysis depends on charge relay system residues Lys81 and Ser156. The Acyl-ester intermediate role is filled by Ser180.

This sequence belongs to the amidase family. GatA subfamily. Heterotrimer of A, B and C subunits.

The enzyme catalyses L-glutamyl-tRNA(Gln) + L-glutamine + ATP + H2O = L-glutaminyl-tRNA(Gln) + L-glutamate + ADP + phosphate + H(+). In terms of biological role, allows the formation of correctly charged Gln-tRNA(Gln) through the transamidation of misacylated Glu-tRNA(Gln) in organisms which lack glutaminyl-tRNA synthetase. The reaction takes place in the presence of glutamine and ATP through an activated gamma-phospho-Glu-tRNA(Gln). In Mycolicibacterium paratuberculosis (strain ATCC BAA-968 / K-10) (Mycobacterium paratuberculosis), this protein is Glutamyl-tRNA(Gln) amidotransferase subunit A.